The sequence spans 350 residues: L-serine dehydratase (350 aa).

K62 carries the post-translational modification N6-(pyridoxal phosphate)lysine.

The protein belongs to the serine/threonine dehydratase family. Pyridoxal 5'-phosphate is required as a cofactor.

The protein localises to the cytoplasm. It catalyses the reaction L-serine = pyruvate + NH4(+). The protein operates within carbohydrate biosynthesis; gluconeogenesis. This is L-serine dehydratase (sds) from Dictyostelium discoideum (Social amoeba).